Here is a 416-residue protein sequence, read N- to C-terminus: Putative nucleoside permease NupX (416 aa).

Over 1 to 2 the chain is Periplasmic; sequence MD. A helical transmembrane segment spans residues 3–23; that stretch reads VMRSVLGMVVLLTIAFLLSVN. Topologically, residues 24-31 are cytoplasmic; it reads KKKISLRT. A helical transmembrane segment spans residues 32–52; sequence VGAALVLQVVIGGIMLWLPPG. The Periplasmic segment spans residues 53 to 95; the sequence is RWVAEKVAFGVHKVMAYSDAGSAFIFGSLVGPKMDTLFDGAGF. A helical membrane pass occupies residues 96–118; that stretch reads IFGFRVLPAIIFVTALVSILYYI. The Cytoplasmic segment spans residues 119-172; that stretch reads GVMGILIRILGGIFQKALNISKIESFVAVTTIFLGQNEIPAIVKPFIDRLNRNE. Residues 173-193 form a helical membrane-spanning segment; it reads LFTAICSGMASIAGSTMIGYA. The Periplasmic portion of the chain corresponds to 194 to 196; that stretch reads ALG. A helical transmembrane segment spans residues 197 to 217; that stretch reads VPVEYLLAASLMAIPGGILFA. Residues 218–246 are Cytoplasmic-facing; sequence RLLSPATESSQVSFNNLSFTETPPKSIIE. Residues 247–267 traverse the membrane as a helical segment; it reads AAATGAMTGLKIAAGVATVVM. The Periplasmic segment spans residues 268–352; sequence AFVAIIALIN…QTAGTLDAKT (85 aa). The helical transmembrane segment at 353–373 threads the bilayer; the sequence is VAIISFALCGFANFGSIGVVV. The Cytoplasmic segment spans residues 374–394; the sequence is GAFSAVAPHRAPEIAQLGLRA. Residues 395 to 415 traverse the membrane as a helical segment; the sequence is LAAATLSNLMSATIAGFFIGL. Residue Ala416 is a topological domain, periplasmic.

Belongs to the concentrative nucleoside transporter (CNT) (TC 2.A.41) family.

The protein localises to the cell inner membrane. This Escherichia coli (strain K12) protein is Putative nucleoside permease NupX (nupX).